A 618-amino-acid polypeptide reads, in one-letter code: F-box/LRR-repeat protein At3g58940 (618 aa).

Residues 1–47 (MDRVSNLPEEVRCHILSFLPTKHAALTSVLSKSWLNLWKFETNLDID) form the F-box domain. LRR repeat units follow at residues 147–176 (LKLR…NIDS), 196–223 (EVHM…SIHG), 224–249 (TGVE…NYSD), 282–313 (TLYL…GLKS), 314–339 (DEGR…IIEG), and 354–379 (CISR…GFRG). Residues 587–618 (ATDSERAETSSNQEMTELGQATATYFPPREGE) form a disordered region. Residues 595–609 (TSSNQEMTELGQATA) are compositionally biased toward polar residues.

This Arabidopsis thaliana (Mouse-ear cress) protein is F-box/LRR-repeat protein At3g58940.